The following is a 142-amino-acid chain: 5-hydroxymethyl-dUMP N-hydrolase (142 aa).

Gly7, Ile9, Arg10, Gly11, Ser78, Gly80, Glu84, and Ser108 together coordinate 5-hydroxymethyl-dUMP.

This sequence belongs to the 2'-deoxynucleoside 5'-phosphate N-hydrolase 1 family. As to quaternary structure, monomer and homodimer.

Its subcellular location is the cytoplasm. It is found in the nucleus. It carries out the reaction 5-hydroxymethyl-dUMP + H2O = 5-hydroxymethyluracil + 2-deoxy-D-ribose 5-phosphate. Its function is as follows. Part of a nucleotide salvage pathway that eliminates epigenetically modified 5-hydroxymethyl-dCMP (hmdCMP) in a two-step process entailing deamination to cytotoxic 5-hydroxymethyl-dUMP (hmdUMP), followed by its hydrolysis into 5-hydroxymethyluracil (hmU) and 2-deoxy-D-ribose 5-phosphate (deoxyribosephosphate). Catalyzes the second step in that pathway, the hydrolysis of the N-glycosidic bond in hmdUMP, degrading this cytotoxic nucleotide to avoid its genomic integration. The chain is 5-hydroxymethyl-dUMP N-hydrolase (dnph1) from Tetraodon nigroviridis (Spotted green pufferfish).